The primary structure comprises 70 residues: Melittin (70 aa).

A signal peptide spans 1–21 (MKFLVNVALVFMVVYISFIYA). A propeptide spans 22-43 (APEPEPAPEAEAEADAEADPEA) (removed by a dipeptidylpeptidase). At Gly-44 the chain carries N-formylglycine; partial. Glutamine amide is present on Gln-69.

The protein belongs to the melittin family. As to quaternary structure, monomer (in solution and for integration into membranes), homotetramer (in solution and potentially as a toroidal pore in membranes), and potenially homomultimer (as a toroidal pore in membranes). Expressed by the venom gland.

Its subcellular location is the secreted. The protein resides in the target cell membrane. Functionally, main toxin of bee venom with strong hemolytic activity and antimicrobial activity. It has enhancing effects on bee venom phospholipase A2 activity. This amphipathic toxin binds to negatively charged membrane surface and forms pore by inserting into lipid bilayers inducing the leakage of ions and molecules and the enhancement of permeability that ultimately leads to cell lysis. It acts as a voltage-gated pore with higher selectivity for anions over cations. The ion conductance has been shown to be voltage-dependent. Self-association of melittin in membranes is promoted by high ionic strength, but not by the presence of negatively charged lipids. In vivo, intradermal injection into healthy human volunteers produce sharp pain sensation and an inflammatory response. It produces pain by activating primary nociceptor cells directly and indirectly due to its ability to activate plasma membrane phospholipase A2 and its pore-forming activity. The sequence is that of Melittin (MELT) from Polistes hebraeus (Paper wasp).